Reading from the N-terminus, the 226-residue chain is MATPASITNVTVEFLQFPALVTPPGSTKSYFLGGAGVRGLNIQEEFVKFTGIGVYLEDKAVSSLAAKWKGKSAAELLDSLDFYRDIIKGPFEKLIRGSKLRTLDGREYVRKVSENCVAHMQSVGTYSDEEEKAIEEFRNAFKDQNFPPGSTVFYKQSPTGTLGLSFSKDETIPEHEHAVIDNKPLSEAVLETMIGEIPVSPALKESLATRFHQFFKELEANPNIEN.

Substrate is bound by residues Thr-50, Asn-115, and Thr-192.

Belongs to the chalcone isomerase family.

The catalysed reaction is a chalcone = a flavanone.. It participates in secondary metabolite biosynthesis; flavonoid biosynthesis. Functionally, catalyzes the intramolecular cyclization of bicyclic chalcones into tricyclic (S)-flavanones. Responsible for the isomerization of 4,2',4',6'-tetrahydroxychalcone (also termed chalcone) into naringenin. The protein is Chalcone--flavanone isomerase 1B-1 (CHI1B1) of Glycine max (Soybean).